Reading from the N-terminus, the 239-residue chain is Ribose-5-phosphate isomerase A (239 aa).

Substrate contacts are provided by residues 40–43 (SGST), 96–99 (DGAD), and 110–113 (KGGG). The Proton acceptor role is filled by Glu119. Residue Lys137 participates in substrate binding.

Belongs to the ribose 5-phosphate isomerase family. Homodimer.

It catalyses the reaction aldehydo-D-ribose 5-phosphate = D-ribulose 5-phosphate. Its pathway is carbohydrate degradation; pentose phosphate pathway; D-ribose 5-phosphate from D-ribulose 5-phosphate (non-oxidative stage): step 1/1. Catalyzes the reversible conversion of ribose-5-phosphate to ribulose 5-phosphate. The protein is Ribose-5-phosphate isomerase A of Methanococcus maripaludis (strain DSM 14266 / JCM 13030 / NBRC 101832 / S2 / LL).